Reading from the N-terminus, the 541-residue chain is Peptidyl-prolyl isomerase cwc-27 (541 aa).

Positions 11–193 constitute a PPIase cyclophilin-type domain; that stretch reads PTASAIIHTT…YPIKITRIEI (183 aa). Disordered stretches follow at residues 199–443 and 513–541; these read DDMQ…GQAD and TLKE…RDRH. Composition is skewed to basic and acidic residues over residues 279 to 307, 316 to 348, and 361 to 374; these read AKRD…ESRR, QKKE…KTNE, and IHSE…KKSA. Acidic residues predominate over residues 432-442; that stretch reads DVEDGEQDGQA. 2 stretches are compositionally biased toward basic and acidic residues: residues 513–525 and 532–541; these read TLKE…RDAK and AWDRGRRDRH.

Belongs to the cyclophilin-type PPIase family. CWC27 subfamily. As to quaternary structure, associated with the spliceosome.

It localises to the cytoplasm. It is found in the nucleus. The enzyme catalyses [protein]-peptidylproline (omega=180) = [protein]-peptidylproline (omega=0). In terms of biological role, PPIases accelerate the folding of proteins. It catalyzes the cis-trans isomerization of proline imidic peptide bonds in oligopeptides. Involved in pre-mRNA splicing. The chain is Peptidyl-prolyl isomerase cwc-27 (cwc-27) from Neurospora crassa (strain ATCC 24698 / 74-OR23-1A / CBS 708.71 / DSM 1257 / FGSC 987).